The sequence spans 107 residues: Phosphoribosyl-ATP pyrophosphatase (107 aa).

This sequence belongs to the PRA-PH family.

The protein localises to the cytoplasm. It catalyses the reaction 1-(5-phospho-beta-D-ribosyl)-ATP + H2O = 1-(5-phospho-beta-D-ribosyl)-5'-AMP + diphosphate + H(+). Its pathway is amino-acid biosynthesis; L-histidine biosynthesis; L-histidine from 5-phospho-alpha-D-ribose 1-diphosphate: step 2/9. This chain is Phosphoribosyl-ATP pyrophosphatase, found in Rhizobium johnstonii (strain DSM 114642 / LMG 32736 / 3841) (Rhizobium leguminosarum bv. viciae).